Consider the following 253-residue polypeptide: Small ribosomal subunit protein eS6 (253 aa).

The disordered stretch occupies residues 200 to 253; it reads KKRLAKRKQSENDYAKLLAQRKKESKVRRQEELKRRRSASMRDSKSSDKSAPQK. Basic and acidic residues predominate over residues 226–247; sequence VRRQEELKRRRSASMRDSKSSD.

The protein belongs to the eukaryotic ribosomal protein eS6 family. As to quaternary structure, component of the small ribosomal subunit. Part of the small subunit (SSU) processome, composed of more than 70 proteins and the RNA chaperone small nucleolar RNA (snoRNA) U3. In terms of processing, ribosomal protein S6 is the major substrate of protein kinases in eukaryote ribosomes.

It localises to the cytoplasm. The protein resides in the nucleus. Its subcellular location is the nucleolus. In terms of biological role, component of the 40S small ribosomal subunit. Plays an important role in controlling cell growth and proliferation through the selective translation of particular classes of mRNA. Part of the small subunit (SSU) processome, first precursor of the small eukaryotic ribosomal subunit. During the assembly of the SSU processome in the nucleolus, many ribosome biogenesis factors, an RNA chaperone and ribosomal proteins associate with the nascent pre-rRNA and work in concert to generate RNA folding, modifications, rearrangements and cleavage as well as targeted degradation of pre-ribosomal RNA by the RNA exosome. The protein is Small ribosomal subunit protein eS6 (RpS6) of Spodoptera frugiperda (Fall armyworm).